We begin with the raw amino-acid sequence, 370 residues long: Doublesex- and mab-3-related transcription factor C2 (370 aa).

The tract at residues 1–38 (MDPSETAALHHCSADSSPADEARVPQSTELIPRRPVSR) is disordered. Positions 42–89 (CARCRNHGVTAHLKGHKRLCLFQACECHKCVLILERRRVMAAQVALRR) form a DNA-binding region, DM. Positions 334–356 (APPGGRGFQPVGPPLRPSPGSSV) are disordered.

Belongs to the DMRT family. As to expression, expressed in testis. Highly expressed in ovary.

The protein resides in the nucleus. In terms of biological role, may be involved in sexual development. The polypeptide is Doublesex- and mab-3-related transcription factor C2 (Dmrtc2) (Mus musculus (Mouse)).